The following is a 230-amino-acid chain: uncharacterized protein (230 aa).

This is an uncharacterized protein from Sinorhizobium fredii (strain NBRC 101917 / NGR234).